The primary structure comprises 279 residues: Presqualene diphosphate synthase (279 aa).

It belongs to the phytoene/squalene synthase family. HpnD subfamily.

The enzyme catalyses 2 (2E,6E)-farnesyl diphosphate = presqualene diphosphate + diphosphate. The protein operates within secondary metabolite biosynthesis; hopanoid biosynthesis. Functionally, involved in the biosynthesis of the hopanoid precursor squalene (SQ) from farnesyl diphosphate (FPP). Catalyzes the first step, the formation of presqualene diphosphate (PSPP) from two molecules of FPP. The polypeptide is Presqualene diphosphate synthase (Rhodopseudomonas palustris (strain ATCC BAA-98 / CGA009)).